The chain runs to 459 residues: NADH oxidase (459 aa).

Asn10 is an FAD binding site. His11 acts as the Proton acceptor in catalysis. The FAD site is built by Ala12, Asp34, Gln35, Cys44, Val81, Ala110, Ser113, Lys143, and Tyr172. Cys44 functions as the Redox-active in the catalytic mechanism. Cys44 is modified (cysteine sulfinic acid (-SO2H)). Ile173, Asp192, Tyr201, and Gly256 together coordinate NAD(+). Asp294 contacts FAD. Position 310 (Ala310) interacts with NAD(+). 3 residues coordinate FAD: Leu311, Ala312, and Ser313. Gly341 lines the NAD(+) pocket. Phe439 is a binding site for FAD.

Belongs to the class-III pyridine nucleotide-disulfide oxidoreductase family. Requires FAD as cofactor.

It is found in the secreted. The protein resides in the cell wall. It carries out the reaction 2 NADH + O2 + 2 H(+) = 2 NAD(+) + 2 H2O. In terms of biological role, catalyzes the four-electron reduction of molecular oxygen to water. Plays a role in redox balance maintenance. May be involved in mediating bacterial adhesion to host cells. May be considered a potential virulence factor. The chain is NADH oxidase from Streptococcus pneumoniae serotype 4 (strain ATCC BAA-334 / TIGR4).